The sequence spans 278 residues: MKYIGAHVSAAGGLDQVIFRSKELGATAFSFFLSNPLRWNLIQFRDETIKKFIFLCKKFNYVSDQILPHSSYLINLGHPSDEHLKKSRLLFVNEIINCKKLNLSLLNFHPGSHLRKISEQHCLIRVADSINFALQNTVGVKLVIENTAGQGSNIGYCFEHLAQIIHKVKEKDRIGICLDTCHLHASGYDLKTELGCRQTFKAFNDIVGLHYLSGMHINDSKTKRNSRIDRHHNLGQGYIGKSSIRWIIRNINFKLFPMILETTNNKLWKDEINWINSL.

9 residues coordinate Zn(2+): H69, H109, E145, D179, H182, H216, D229, H231, and E261.

This sequence belongs to the AP endonuclease 2 family. The cofactor is Zn(2+).

It carries out the reaction Endonucleolytic cleavage to 5'-phosphooligonucleotide end-products.. Functionally, endonuclease IV plays a role in DNA repair. It cleaves phosphodiester bonds at apurinic or apyrimidinic (AP) sites, generating a 3'-hydroxyl group and a 5'-terminal sugar phosphate. This is Probable endonuclease 4 from Buchnera aphidicola subsp. Baizongia pistaciae (strain Bp).